A 190-amino-acid polypeptide reads, in one-letter code: Protein GrpE (190 aa).

Residues 1-33 are disordered; sequence MSEQEKDQNNAEPQVETVEEQQAAAAAEAVEPT. The span at 11–32 shows a compositional bias: low complexity; that stretch reads AEPQVETVEEQQAAAAAEAVEP.

It belongs to the GrpE family. As to quaternary structure, homodimer.

The protein resides in the cytoplasm. In terms of biological role, participates actively in the response to hyperosmotic and heat shock by preventing the aggregation of stress-denatured proteins, in association with DnaK and GrpE. It is the nucleotide exchange factor for DnaK and may function as a thermosensor. Unfolded proteins bind initially to DnaJ; upon interaction with the DnaJ-bound protein, DnaK hydrolyzes its bound ATP, resulting in the formation of a stable complex. GrpE releases ADP from DnaK; ATP binding to DnaK triggers the release of the substrate protein, thus completing the reaction cycle. Several rounds of ATP-dependent interactions between DnaJ, DnaK and GrpE are required for fully efficient folding. This chain is Protein GrpE, found in Alcanivorax borkumensis (strain ATCC 700651 / DSM 11573 / NCIMB 13689 / SK2).